The following is a 510-amino-acid chain: ATP synthase subunit alpha, mitochondrial (510 aa).

171-178 (GDRQTGKT) provides a ligand contact to ATP.

As to quaternary structure, F-type ATP synthases have 2 components, the catalytic core F(1) and the membrane-embedded component F(0), linked together by a central stalk and a peripheral stalk. The central stalk, also called rotor shaft, is often seen as part of F(1). The peripheral stalk is seen as part of F(0). F(0) contains the membrane channel next to the rotor. F-type ATP synthases form dimers but each monomer functions independently in ATP generation. The dimer consists of 18 different polypeptides: ATP1 (subunit alpha, part of F(1), 3 molecules per monomer), ATP2 (subunit beta, part of F(1), 3 molecules per monomer), ATP3 (subunit gamma, part of the central stalk), ATP4 (subunit b, part of the peripheral stalk), ATP5/OSCP (subunit 5/OSCP, part of the peripheral stalk), ATP6 (subunit a, part of the peripheral stalk), ATP7 (subunit d, part of the peripheral stalk), ATP8 (subunit 8, part of the peripheral stalk), OLI1 (subunit c, part of the rotor, 10 molecules per monomer), ATP14 (subunit h, part of the peripheral stalk), ATP15 (subunit epsilon, part of the central stalk), ATP16 (subunit delta, part of the central stalk), ATP17 (subunit f, part of the peripheral stalk), ATP18 (subunit i/j, part of the peripheral stalk). Dimer-specific subunits are ATP19 (subunit k, at interface between monomers), ATP20 (subunit g, at interface between monomers), TIM11 (subunit e, at interface between monomers). Also contains subunit L.

It is found in the mitochondrion inner membrane. In terms of biological role, mitochondrial membrane ATP synthase (F(1)F(0) ATP synthase or Complex V) produces ATP from ADP in the presence of a proton gradient across the membrane which is generated by electron transport complexes of the respiratory chain. F-type ATP synthases consist of two structural domains, F(1) - containing the extramembraneous catalytic core, and F(0) - containing the membrane proton channel, linked together by a central stalk and a peripheral stalk. During catalysis, ATP synthesis in the catalytic domain of F(1) is coupled via a rotary mechanism of the central stalk subunits to proton translocation. Subunits alpha/ATP1 and beta/ATP2 form the catalytic core in F(1). Rotation of the central stalk against the surrounding alpha/ATP1(3)beta/ATP2(3) subunits leads to hydrolysis of ATP in three separate catalytic sites on the beta/ATP2 subunits. Subunit alpha/ATP1 does not bear the catalytic high-affinity ATP-binding sites. This is ATP synthase subunit alpha, mitochondrial from Pichia angusta (Yeast).